A 316-amino-acid polypeptide reads, in one-letter code: Ribosomal RNA small subunit methyltransferase H (316 aa).

S-adenosyl-L-methionine-binding positions include 35–37 (GGH), Asp-55, Phe-79, Asp-101, and Gln-108. A disordered region spans residues 291 to 316 (ALKPSDQEVELNPRSRSSVLRVAEKL).

It belongs to the methyltransferase superfamily. RsmH family.

The protein localises to the cytoplasm. It catalyses the reaction cytidine(1402) in 16S rRNA + S-adenosyl-L-methionine = N(4)-methylcytidine(1402) in 16S rRNA + S-adenosyl-L-homocysteine + H(+). Functionally, specifically methylates the N4 position of cytidine in position 1402 (C1402) of 16S rRNA. The polypeptide is Ribosomal RNA small subunit methyltransferase H (Vibrio cholerae serotype O1 (strain ATCC 39315 / El Tor Inaba N16961)).